Consider the following 494-residue polypeptide: MAGEGGELTAALLKKTTENGGEENDELGLKEKVWIESKKLWVVAAPSIFTKFSTYGVSLVTQGFVGHIGPTELAAYSITFTVLLRFSNGILLGMASALGTLCGQAYGAKQYHMLGIHLQRSWIVLTGCTICIMPIFIFSGPILLALGQEDHIVRVARVIALWLIAINFTFVPAFTCQIFLQSQSKNKIIAYVSAVTLGLHVFFSWLLVVHFNFGITGAMTSTLVAFWMPNIVQLLYVTSGGCKDTWRGFTMLAFKDLWPVFKLSLSSGGMVCLELWYNSILVLLTGNLKNAEVAIDALAICINVNALQMMIALGFLAAVSVRVSNELGRGNPEGAKFATIVAVFTSLSIGLVLFFVFLFLRGRISYIFTTSEAVAAEVADLSPLLAFSILLNSVQPVLSGVAVGAGWQGYVAYINLACYYLLGIPVGLVLGYVVGLQVKGVWIGMLFGIFVQTCVLTIMTLRTDWDQQVSTSLKNINRWVVPESRDANQISSEE.

A run of 12 helical transmembrane segments spans residues 40 to 60 (LWVVAAPSIFTKFSTYGVSLV), 78 to 98 (ITFTVLLRFSNGILLGMASAL), 123 to 143 (IVLTGCTICIMPIFIFSGPIL), 159 to 179 (IALWLIAINFTFVPAFTCQIF), 188 to 208 (IIAYVSAVTLGLHVFFSWLLV), 217 to 237 (GAMTSTLVAFWMPNIVQLLYV), 268 to 288 (GGMVCLELWYNSILVLLTGNL), 299 to 319 (AICINVNALQMMIALGFLAAV), 340 to 360 (IVAVFTSLSIGLVLFFVFLFL), 384 to 404 (LLAFSILLNSVQPVLSGVAVG), 416 to 436 (LACYYLLGIPVGLVLGYVVGL), and 441 to 461 (VWIGMLFGIFVQTCVLTIMTL).

Belongs to the multi antimicrobial extrusion (MATE) (TC 2.A.66.1) family.

It localises to the membrane. The chain is Protein DETOXIFICATION 22 from Arabidopsis thaliana (Mouse-ear cress).